The chain runs to 380 residues: Large ribosomal subunit protein mL38 (380 aa).

A mitochondrion-targeting transit peptide spans 1-26; sequence MAAPWWRVVLNGSRNWRGFSTSAALS. Positions 101-122 form a coiled coil; sequence QQLLERKRVLRELRTSVEEERA.

The protein belongs to the phosphatidylethanolamine-binding protein family. Mitochondrion-specific ribosomal protein mL38 subfamily. Component of the mitochondrial ribosome large subunit (39S) which comprises a 16S rRNA and about 50 distinct proteins.

The protein localises to the mitochondrion. This Bos taurus (Bovine) protein is Large ribosomal subunit protein mL38 (MRPL38).